The following is a 559-amino-acid chain: Cytokine-like nuclear factor N-PAC (559 aa).

Positions 9-70 constitute a PWWP domain; the sequence is VNDLVWAKMK…ETQIKPYQEF (62 aa). The disordered stretch occupies residues 106–137; the sequence is SEQDNRPDPDVEFNKLREGGTESGEETTVNNT. The segment covering 108 to 125 has biased composition (basic and acidic residues); the sequence is QDNRPDPDVEFNKLREGG. A dehydrogenase domain region spans residues 267–559; it reads RNIQASNLKF…SSAVYVRARF (293 aa). NAD(+) contacts are provided by residues 277–291 and Lys511; that span reads GFLG…MVKN.

Belongs to the HIBADH-related family. NP60 subfamily. In terms of assembly, binds to mononucleosomes.

The protein localises to the chromosome. Nucleosome-destabilizing factor that is recruited to genes during transcriptional activation and colocalizes with a subset of trimethylated 'Lys-36' histone H3 (H3K36me3)-enriched regions. This is Cytokine-like nuclear factor N-PAC from Aedes aegypti (Yellowfever mosquito).